Here is an 874-residue protein sequence, read N- to C-terminus: Alanine--tRNA ligase (874 aa).

Zn(2+)-binding residues include histidine 564, histidine 568, cysteine 665, and histidine 669.

The protein belongs to the class-II aminoacyl-tRNA synthetase family. The cofactor is Zn(2+).

The protein localises to the cytoplasm. It carries out the reaction tRNA(Ala) + L-alanine + ATP = L-alanyl-tRNA(Ala) + AMP + diphosphate. Its function is as follows. Catalyzes the attachment of alanine to tRNA(Ala) in a two-step reaction: alanine is first activated by ATP to form Ala-AMP and then transferred to the acceptor end of tRNA(Ala). Also edits incorrectly charged Ser-tRNA(Ala) and Gly-tRNA(Ala) via its editing domain. This is Alanine--tRNA ligase from Paraburkholderia phymatum (strain DSM 17167 / CIP 108236 / LMG 21445 / STM815) (Burkholderia phymatum).